The following is a 123-amino-acid chain: Holo-[acyl-carrier-protein] synthase (123 aa).

The Mg(2+) site is built by aspartate 9 and glutamate 57.

It belongs to the P-Pant transferase superfamily. AcpS family. Mg(2+) serves as cofactor.

It is found in the cytoplasm. The catalysed reaction is apo-[ACP] + CoA = holo-[ACP] + adenosine 3',5'-bisphosphate + H(+). Transfers the 4'-phosphopantetheine moiety from coenzyme A to a Ser of acyl-carrier-protein. This Streptomyces avermitilis (strain ATCC 31267 / DSM 46492 / JCM 5070 / NBRC 14893 / NCIMB 12804 / NRRL 8165 / MA-4680) protein is Holo-[acyl-carrier-protein] synthase.